The primary structure comprises 257 residues: uncharacterized protein (257 aa).

The next 6 membrane-spanning stretches (helical) occupy residues 23 to 43, 79 to 99, 131 to 151, 158 to 178, 199 to 219, and 221 to 241; these read VLTDPVSWGLIGSLVVLEGLL, FIFIGLGMLLIKFWWIKVLGA, TFGIFWATVISVELMDLAFSV, FAVSEKVWVLLIGGMLGILMM, AFVLIGIIALKMAGSAFHYEM, and HSVFFIIIIAAFAVTLIIHYI.

Belongs to the TerC family.

It localises to the cell membrane. This is an uncharacterized protein from Bacillus subtilis (strain 168).